Reading from the N-terminus, the 343-residue chain is Biotin synthase (343 aa).

The Radical SAM core domain maps to 36 to 254; sequence RQVQVSTLLS…IAVARIMMPR (219 aa). Positions 51, 55, and 58 each coordinate [4Fe-4S] cluster. Residues Cys95, Cys126, Cys186, and Arg258 each coordinate [2Fe-2S] cluster.

The protein belongs to the radical SAM superfamily. Biotin synthase family. As to quaternary structure, homodimer. [4Fe-4S] cluster serves as cofactor. It depends on [2Fe-2S] cluster as a cofactor.

The catalysed reaction is (4R,5S)-dethiobiotin + (sulfur carrier)-SH + 2 reduced [2Fe-2S]-[ferredoxin] + 2 S-adenosyl-L-methionine = (sulfur carrier)-H + biotin + 2 5'-deoxyadenosine + 2 L-methionine + 2 oxidized [2Fe-2S]-[ferredoxin]. It participates in cofactor biosynthesis; biotin biosynthesis; biotin from 7,8-diaminononanoate: step 2/2. Catalyzes the conversion of dethiobiotin (DTB) to biotin by the insertion of a sulfur atom into dethiobiotin via a radical-based mechanism. The polypeptide is Biotin synthase (Erwinia tasmaniensis (strain DSM 17950 / CFBP 7177 / CIP 109463 / NCPPB 4357 / Et1/99)).